Here is an 843-residue protein sequence, read N- to C-terminus: Protein PLASTID MOVEMENT IMPAIRED 1 (843 aa).

A compositionally biased stretch (polar residues) spans 30 to 58 (PQVSVGNRRTNSLALPRSSVPSLVTSADE). 2 disordered regions span residues 30-65 (PQVS…ARAE) and 88-116 (LEVE…SGVK). Residues 131–284 (LVRIGMQKLS…ELALKLGFQI (154 aa)) form the C2 NT-type domain. Disordered stretches follow at residues 300–412 (FGMK…GTIG) and 450–472 (MMKD…EEEQ). The span at 307-336 (KPKNFANSFGRKQSKTSFSVPSPKMTSRSE) shows a compositional bias: polar residues. 2 positions are modified to phosphoserine: Ser314 and Ser328. Basic and acidic residues predominate over residues 365–381 (PEEKPVQKNDKPEQRAE). Thr404 bears the Phosphothreonine mark. Ser407 is modified (phosphoserine). Thr410 carries the post-translational modification Phosphothreonine. A compositionally biased stretch (acidic residues) spans 456–472 (DGGDGETESQRLDEEEQ). A Phosphoserine modification is found at Ser507.

In terms of tissue distribution, expressed in leaves, stems, cauline leaves, and flowers but not in roots. Present in leaves in both mesophyll and pavement cells.

The protein resides in the cytoplasm. Functionally, necessary for chloroplast and nuclear photorelocation movements via the regulation of chloroplast-actin (cp-actin) filaments in mesophyll cells, and together with PMIR1, in pavement cells. Required component for both the low- and high-light-dependent chloroplast movement responses via an abscisic acid (ABA) pathway. Involved in the ABA response pathway during seed germination. Modulates ABA accumulation during periods of water deficit at the seedling stage. This is Protein PLASTID MOVEMENT IMPAIRED 1 from Arabidopsis thaliana (Mouse-ear cress).